Consider the following 314-residue polypeptide: CD-NTase-associated protein 12 (314 aa).

The TIR domain maps to Arg-5 to Lys-129. Positions Ser-160 to Asn-314 are STING domain. 3',3'-c-di-GMP-binding residues include Phe-171, Pro-234, and Asp-252.

It in the C-terminal section; belongs to the bacterial STING family. In terms of assembly, homodimer. Forms homodimers; in the presence of c-di-GMP forms filaments with an ordered array of parallel-stacked subunits.

It carries out the reaction NAD(+) + H2O = ADP-D-ribose + nicotinamide + H(+). NAD(+) hydrolase activity is strongly stimulated by c-di-GMP, weakly by 3'3'-cGAMP, very weakly by c-di-AMP but not at all by 2'3'-cGAMP. Self-association of TIR domains is required for NADase activity. Functionally, effector protein of a CBASS antiviral system with NAD(+) hydrolase activity. CBASS (cyclic oligonucleotide-based antiphage signaling system) provides immunity against bacteriophage. The CD-NTase protein synthesizes cyclic nucleotides in response to infection; these serve as specific second messenger signals. The signals activate a diverse range of effectors, leading to bacterial cell death and thus abortive phage infection. A type I-(GG) CBASS system. Its function is as follows. Binds c-di-GMP (synthesized by the cognate CdnE encoded upstream in the same operon), and about 10-fold less well 3'3'-cGAMP, but not c-di-AMP, 2'-3'-cGAMP or cUMP-AMP (tested without the N-terminal TIR domain). Upon activation by c-di-GMP forms filaments which hydrolyze NAD(+); filament formation is required for enzyme activation. The protein is CD-NTase-associated protein 12 of Capnocytophaga granulosa (strain ATCC 51502 / DSM 11449 / JCM 8566 / LMG 16022 / NCTC 12948 / B0611).